The following is a 115-amino-acid chain: Large ribosomal subunit protein bL20c (115 aa).

Belongs to the bacterial ribosomal protein bL20 family.

It is found in the plastid. It localises to the chloroplast. In terms of biological role, binds directly to 23S ribosomal RNA and is necessary for the in vitro assembly process of the 50S ribosomal subunit. It is not involved in the protein synthesizing functions of that subunit. The polypeptide is Large ribosomal subunit protein bL20c (Chlorokybus atmophyticus (Soil alga)).